A 370-amino-acid chain; its full sequence is Tyrosyl-DNA phosphodiesterase 2 (370 aa).

Residue Met-1 is modified to N-acetylmethionine. The disordered stretch occupies residues 1 to 32; it reads MASGSSSDAAEPAGPAGRAASAPEAAQAEEDR. Residues 9 to 26 show a composition bias toward low complexity; it reads AAEPAGPAGRAASAPEAA. A Glycyl lysine isopeptide (Lys-Gly) (interchain with G-Cter in SUMO2) cross-link involves residue Lys-34. At Thr-99 the chain carries Phosphothreonine; by ACVR1B. The tract at residues 130 to 134 is interaction with 5' end of substrate DNA; the sequence is NIDGL. Positions 132 and 162 each coordinate Mg(2+). Residues 236 to 241 are interaction with 5' end of substrate DNA; that stretch reads HLESTR. The Proton donor/acceptor role is filled by Asp-272. Interaction with 5' end of substrate DNA regions lie at residues 274 to 276 and 315 to 321; these read NLR and LRIPAAY.

The protein belongs to the CCR4/nocturin family. In terms of assembly, interacts with TRAF2, TRAF3, TRAF5, TRAF6, TNFRSF8/CD30, TNFRSF5/CD40, TNFRSF1B/TNF-R75, ETS1, ETS2, FLI1, SMAD3 and ACVR1B/ALK4. It depends on Mg(2+) as a cofactor. Mn(2+) is required as a cofactor. Post-translationally, ubiquitinated by TRAF6. As to expression, widely expressed. Expressed in whole brain, cerebellum, quiescent cortical astrocytes and cerebellar granule neurons.

The protein localises to the nucleus. It localises to the PML body. It is found in the nucleolus. The protein resides in the cytoplasm. Its function is as follows. DNA repair enzyme that can remove a variety of covalent adducts from DNA through hydrolysis of a 5'-phosphodiester bond, giving rise to DNA with a free 5' phosphate. Catalyzes the hydrolysis of dead-end complexes between DNA and the topoisomerase 2 (TOP2) active site tyrosine residue. The 5'-tyrosyl DNA phosphodiesterase activity can enable the repair of TOP2-induced DNA double-strand breaks/DSBs without the need for nuclease activity, creating a 'clean' DSB with 5'-phosphate termini that are ready for ligation. Thereby, protects the transcription of many genes involved in neurological development and maintenance from the abortive activity of TOP2. Hydrolyzes 5'-phosphoglycolates on protruding 5' ends on DSBs due to DNA damage by radiation and free radicals. Has preference for single-stranded DNA or duplex DNA with a 4 base pair overhang as substrate. Also has 3'-tyrosyl DNA phosphodiesterase activity, but less efficiently and much slower than TDP1. Constitutes the major if not only 5'-tyrosyl-DNA phosphodiesterase in cells. Also acts as an adapter by participating in the specific activation of MAP3K7/TAK1 in response to TGF-beta: associates with components of the TGF-beta receptor-TRAF6-TAK1 signaling module and promotes their ubiquitination dependent complex formation. Involved in non-canonical TGF-beta induced signaling routes. May also act as a negative regulator of ETS1 and may inhibit NF-kappa-B activation. Acts as a regulator of ribosome biogenesis following stress. The sequence is that of Tyrosyl-DNA phosphodiesterase 2 (Tdp2) from Mus musculus (Mouse).